Reading from the N-terminus, the 228-residue chain is Aquaporin Z 2 (228 aa).

Transmembrane regions (helical) follow at residues 9 to 29 (FFGT…AAAF) and 34 to 54 (IGFT…AYAV). The short motif at 63–65 (NPA) is the NPA 1 element. 3 helical membrane-spanning segments follow: residues 82-102 (VPYV…LYVI), 129-149 (LVSA…VILG), and 158-178 (GFAP…SIPV). The NPA 2 signature appears at 184-186 (NPA). The chain crosses the membrane as a helical span at residues 204 to 224 (WLFWLAPIVGGAAGAVIWKLF).

Belongs to the MIP/aquaporin (TC 1.A.8) family. As to quaternary structure, homotetramer.

The protein resides in the cell inner membrane. The enzyme catalyses H2O(in) = H2O(out). In terms of biological role, channel that permits osmotically driven movement of water in both directions. It is involved in the osmoregulation and in the maintenance of cell turgor during volume expansion in rapidly growing cells. It mediates rapid entry or exit of water in response to abrupt changes in osmolarity. The polypeptide is Aquaporin Z 2 (Agrobacterium fabrum (strain C58 / ATCC 33970) (Agrobacterium tumefaciens (strain C58))).